We begin with the raw amino-acid sequence, 236 residues long: ATP synthase subunit a (236 aa).

The next 5 helical transmembrane spans lie at 18 to 38, 80 to 100, 112 to 132, 179 to 199, and 200 to 220; these read SNLL…VLCT, VTLL…AIVI, DPAI…YYGI, ILLS…IGAA, and IPML…AFIF.

This sequence belongs to the ATPase A chain family. F-type ATPases have 2 components, CF(1) - the catalytic core - and CF(0) - the membrane proton channel. CF(1) has five subunits: alpha(3), beta(3), gamma(1), delta(1), epsilon(1). CF(0) has three main subunits: a(1), b(2) and c(9-12). The alpha and beta chains form an alternating ring which encloses part of the gamma chain. CF(1) is attached to CF(0) by a central stalk formed by the gamma and epsilon chains, while a peripheral stalk is formed by the delta and b chains.

The protein resides in the cell membrane. Its function is as follows. Key component of the proton channel; it plays a direct role in the translocation of protons across the membrane. The protein is ATP synthase subunit a of Priestia megaterium (strain ATCC 12872 / QMB1551) (Bacillus megaterium).